Consider the following 104-residue polypeptide: Urease subunit beta (104 aa).

This sequence belongs to the urease beta subunit family. In terms of assembly, heterotrimer of UreA (gamma), UreB (beta) and UreC (alpha) subunits. Three heterotrimers associate to form the active enzyme.

It localises to the cytoplasm. The enzyme catalyses urea + 2 H2O + H(+) = hydrogencarbonate + 2 NH4(+). The protein operates within nitrogen metabolism; urea degradation; CO(2) and NH(3) from urea (urease route): step 1/1. This Rhodopseudomonas palustris (strain BisB5) protein is Urease subunit beta.